The primary structure comprises 289 residues: ATP synthase mitochondrial F1 complex assembly factor 2 (289 aa).

Residues 1–40 (MWRSCLRLRDGGRRLLNRPAGGPSASMSPGPTIPSPARAY) constitute a mitochondrion transit peptide. The disordered stretch occupies residues 13–40 (RRLLNRPAGGPSASMSPGPTIPSPARAY). The residue at position 133 (Lys-133) is an N6-succinyllysine.

The protein belongs to the ATP12 family. In terms of assembly, interacts with ATP5F1B; involved in the assembly of the F1 component of the mitochondrial ATP synthase (ATPase). Interacts with FMC1. In terms of tissue distribution, widely expressed.

Its subcellular location is the mitochondrion inner membrane. Functionally, plays a role in the assembly of the F1 component of the mitochondrial ATP synthase (ATPase). This Homo sapiens (Human) protein is ATP synthase mitochondrial F1 complex assembly factor 2.